Reading from the N-terminus, the 124-residue chain is UPF0382 membrane protein HI_1073 (124 aa).

3 helical membrane passes run 6 to 26, 70 to 90, and 95 to 115; these read LTLVALSGFFCVALGAFAAHG, SMSSWLIGILLFSGSLYALAF, and VIVWITPIGGTLFLIGWISLA.

Belongs to the UPF0382 family.

Its subcellular location is the cell membrane. The protein is UPF0382 membrane protein HI_1073 of Haemophilus influenzae (strain ATCC 51907 / DSM 11121 / KW20 / Rd).